The following is a 564-amino-acid chain: MFS-type transporter astH (564 aa).

N-linked (GlcNAc...) asparagine glycosylation occurs at asparagine 23. The disordered stretch occupies residues 26–59; it reads KDTLVNCSPDPENPEKGQASSPRTQISVDDNEES. A compositionally biased stretch (polar residues) spans 43–53; it reads QASSPRTQISV. A run of 4 helical transmembrane segments spans residues 69–89, 106–126, 143–163, and 197–217; these read LAMI…DTTI, DVGW…LSFG, GMFE…GLII, and GILG…GGAF. The N-linked (GlcNAc...) asparagine glycan is linked to asparagine 220. The next 6 membrane-spanning stretches (helical) occupy residues 225 to 245, 266 to 286, 297 to 317, 339 to 359, 375 to 395, and 396 to 416; these read WCFY…ILFF, LLGS…LQWG, IIAL…VQWW, LFSF…PMWF, LPMV…VGAL, and GYYT…AGLL. Asparagine 425 carries an N-linked (GlcNAc...) asparagine glycan. Helical transmembrane passes span 461–481 and 537–557; these read TGTV…MSVG and FYVA…MQWI.

The protein belongs to the major facilitator superfamily. TCR/Tet family.

It localises to the membrane. In terms of biological role, MFS-type transporter; part of the gene cluster that mediates the biosynthesis of astellolides, drimane-type sesquiterpene esters that show antimicrobial, anti-inflammatory, and anti-tumor activities. Seems not to be involved in astellolides translocation. This is MFS-type transporter astH from Aspergillus oryzae (strain ATCC 42149 / RIB 40) (Yellow koji mold).